The following is a 136-amino-acid chain: Large-conductance mechanosensitive channel (136 aa).

Transmembrane regions (helical) follow at residues 9-29 (AFASRGNVIDMAVGIIIGAAF) and 79-99 (IQTVIDFTIIAFAIFMGLKAI).

Belongs to the MscL family. As to quaternary structure, homopentamer.

The protein resides in the cell inner membrane. Its function is as follows. Channel that opens in response to stretch forces in the membrane lipid bilayer. May participate in the regulation of osmotic pressure changes within the cell. This chain is Large-conductance mechanosensitive channel, found in Shewanella putrefaciens (strain CN-32 / ATCC BAA-453).